The chain runs to 487 residues: Glutamyl-tRNA(Gln) amidotransferase subunit A (487 aa).

Residues Lys76 and Ser151 each act as charge relay system in the active site. Ser175 acts as the Acyl-ester intermediate in catalysis.

The protein belongs to the amidase family. GatA subfamily. In terms of assembly, heterotrimer of A, B and C subunits.

The enzyme catalyses L-glutamyl-tRNA(Gln) + L-glutamine + ATP + H2O = L-glutaminyl-tRNA(Gln) + L-glutamate + ADP + phosphate + H(+). In terms of biological role, allows the formation of correctly charged Gln-tRNA(Gln) through the transamidation of misacylated Glu-tRNA(Gln) in organisms which lack glutaminyl-tRNA synthetase. The reaction takes place in the presence of glutamine and ATP through an activated gamma-phospho-Glu-tRNA(Gln). The protein is Glutamyl-tRNA(Gln) amidotransferase subunit A of Azoarcus sp. (strain BH72).